We begin with the raw amino-acid sequence, 338 residues long: Glycerol-3-phosphate dehydrogenase [NAD(P)+] (338 aa).

The NADPH site is built by Ser-13, Trp-14, and Lys-108. Lys-108, Gly-139, and Ser-141 together coordinate sn-glycerol 3-phosphate. Ala-143 provides a ligand contact to NADPH. 5 residues coordinate sn-glycerol 3-phosphate: Lys-194, Asp-247, Ser-257, Arg-258, and Asn-259. Lys-194 serves as the catalytic Proton acceptor. Arg-258 provides a ligand contact to NADPH. NADPH is bound by residues Val-282 and Glu-284.

Belongs to the NAD-dependent glycerol-3-phosphate dehydrogenase family.

It localises to the cytoplasm. The catalysed reaction is sn-glycerol 3-phosphate + NAD(+) = dihydroxyacetone phosphate + NADH + H(+). It catalyses the reaction sn-glycerol 3-phosphate + NADP(+) = dihydroxyacetone phosphate + NADPH + H(+). It participates in membrane lipid metabolism; glycerophospholipid metabolism. Its function is as follows. Catalyzes the reduction of the glycolytic intermediate dihydroxyacetone phosphate (DHAP) to sn-glycerol 3-phosphate (G3P), the key precursor for phospholipid synthesis. This Listeria innocua serovar 6a (strain ATCC BAA-680 / CLIP 11262) protein is Glycerol-3-phosphate dehydrogenase [NAD(P)+].